The primary structure comprises 291 residues: START domain-containing protein 10 (291 aa).

Residue Met1 is modified to N-acetylmethionine. Positions 1-23 (MEKPAASTEPQGSRPALGRESVQ) are disordered. The 211-residue stretch at 14 to 224 (RPALGRESVQ…MYKACIKYPE (211 aa)) folds into the START domain. N6-succinyllysine occurs at positions 94, 197, and 202. Ser253, Ser259, Ser284, and Ser289 each carry phosphoserine. The disordered stretch occupies residues 260–291 (LENIDESAVTESREERAGGAGGEGSDDDTSLT).

Post-translationally, phosphorylation at Ser-284 by CK2 negatively regulates lipid transfer activity, possibly by decreasing membrane association. In terms of tissue distribution, testis, kidney, liver, and intestine with the highest level in the testis.

It is found in the cell projection. It localises to the cilium. The protein localises to the flagellum. Its subcellular location is the cytoplasm. The protein resides in the membrane. In terms of biological role, phospholipid transfer protein that preferentially selects lipid species containing a palmitoyl or stearoyl chain on the sn-1 and an unsaturated fatty acyl chain (18:1 or 18:2) on the sn-2 position. Able to transfer phosphatidylcholine (PC) and phosphatidyetanolamline (PE) between membranes. May play metabolic roles in sperm maturation or fertilization. This Mus musculus (Mouse) protein is START domain-containing protein 10 (Stard10).